The following is a 224-amino-acid chain: Ribonuclease HII (224 aa).

One can recognise an RNase H type-2 domain in the interval 33 to 224 (FHVAGVDEVG…LKERYRNDVS (192 aa)). The a divalent metal cation site is built by Asp39, Glu40, and Asp131.

This sequence belongs to the RNase HII family. The cofactor is Mn(2+). Mg(2+) is required as a cofactor.

The protein resides in the cytoplasm. It catalyses the reaction Endonucleolytic cleavage to 5'-phosphomonoester.. Functionally, endonuclease that specifically degrades the RNA of RNA-DNA hybrids. This chain is Ribonuclease HII, found in Bartonella tribocorum (strain CIP 105476 / IBS 506).